Consider the following 287-residue polypeptide: 1-acyl-sn-glycerol-3-phosphate acyltransferase alpha (287 aa).

Residues 1 to 26 (MELWPGAGTLLLLLFLLLLLLLPTLW) form the signal peptide. Over 27–37 (FCSPSAKYFFK) the chain is Lumenal. The chain crosses the membrane as a helical span at residues 38-58 (MAFYNGWILFLAVLAIPVCAV). Topologically, residues 59-127 (RGRNVENMKI…PGRCVPIAKR (69 aa)) are cytoplasmic. The HXXXXD motif signature appears at 104 to 109 (HQSSLD). Residues 128-148 (ELLWAGSAGLACWLAGVIFID) traverse the membrane as a helical segment. At 149-287 (RKRTGDAISV…KPGGVGEAGL (139 aa)) the chain is on the lumenal side. The EGTR motif motif lies at 178-181 (EGTR).

Belongs to the 1-acyl-sn-glycerol-3-phosphate acyltransferase family.

It is found in the endoplasmic reticulum membrane. It carries out the reaction a 1-acyl-sn-glycero-3-phosphate + an acyl-CoA = a 1,2-diacyl-sn-glycero-3-phosphate + CoA. The enzyme catalyses 1-(9Z-octadecenoyl)-sn-glycero-3-phosphate + (9Z)-octadecenoyl-CoA = 1,2-di-(9Z-octadecenoyl)-sn-glycero-3-phosphate + CoA. It catalyses the reaction 1-(9Z-octadecenoyl)-sn-glycero-3-phosphate + hexadecanoyl-CoA = 1-(9Z)-octadecenoyl-2-hexadecanoyl-sn-glycero-3-phosphate + CoA. The catalysed reaction is heptadecanoyl-CoA + 1-(9Z-octadecenoyl)-sn-glycero-3-phosphate = 1-(9Z)-octadecenoyl-2-heptadecanoyl-sn-glycero-3-phosphate + CoA. It carries out the reaction 1-(9Z-octadecenoyl)-sn-glycero-3-phosphate + octadecanoyl-CoA = 1-(9Z-octadecenoyl)-2-octadecanoyl-sn-glycero-3-phosphate + CoA. The enzyme catalyses 1-(9Z-octadecenoyl)-sn-glycero-3-phosphate + (9Z,12Z)-octadecadienoyl-CoA = 1-(9Z)-octadecenoyl-2-(9Z,12Z)-octadecadienoyl-sn-glycero-3-phosphate + CoA. It catalyses the reaction 1-(9Z-octadecenoyl)-sn-glycero-3-phosphate + tetradecanoyl-CoA = 1-(9Z)-octadecenoyl-2-tetradecanoyl-sn-glycero-3-phosphate + CoA. The catalysed reaction is pentadecanoyl-CoA + 1-(9Z-octadecenoyl)-sn-glycero-3-phosphate = 1-(9Z)-octadecenoyl-2-pentadecanoyl-sn-glycero-3-phosphate + CoA. It carries out the reaction 1-hexadecanoyl-sn-glycero-3-phosphate + (9Z)-octadecenoyl-CoA = 1-hexadecanoyl-2-(9Z-octadecenoyl)-sn-glycero-3-phosphate + CoA. The enzyme catalyses 1-(9Z,12Z,15Z)-octadecatrienoyl-sn-glycero-3-phosphate + (9Z)-octadecenoyl-CoA = 1-(9Z,12Z,15Z)-octadecatrienoyl-2-(9Z)-octadecenoyl-sn-glycero-3-phosphate + CoA. It catalyses the reaction 1-(6Z,9Z,12Z-octadecatrienoyl)-sn-glycero-3-phosphate + (9Z)-octadecenoyl-CoA = (6Z,9Z,12Z)-octadecatrienoyl-2-(9Z)-octadecenoyl-sn-glycero-3-phosphate + CoA. The catalysed reaction is 1-eicosanoyl-sn-glycero-3-phosphate + (9Z)-octadecenoyl-CoA = 1-eicosanoyl-2-(9Z)-octadecenoyl-sn-glycero-3-phosphate + CoA. It carries out the reaction 1-tetradecanoyl-sn-glycerol 3-phosphate + (9Z)-octadecenoyl-CoA = 1-tetradecanoyl-2-(9Z)-octadecenoyl-sn-glycero-3-phosphate + CoA. The enzyme catalyses 1-(9Z-octadecenoyl)-sn-glycero-3-phosphate + (5Z,8Z,11Z,14Z)-eicosatetraenoyl-CoA = 1-(9Z)-octadecenoyl-2-(5Z,8Z,11Z,14Z)-eicosatetraenoyl-sn-glycero-3-phosphate + CoA. It catalyses the reaction 1-(9Z-octadecenoyl)-sn-glycero-3-phosphate + dodecanoyl-CoA = 1-(9Z)-octadecenoyl-2-dodecanoyl-sn-glycero-3-phosphate + CoA. The catalysed reaction is (6Z)-octadecenoyl-CoA + 1-(9Z-octadecenoyl)-sn-glycero-3-phosphate = 1-(9Z)-octadecenoyl-2-(6Z)-octadecenoyl-sn-glycero-3-phosphate + CoA. It carries out the reaction (11Z)-octadecenoyl-CoA + 1-(9Z-octadecenoyl)-sn-glycero-3-phosphate = 1-(9Z)-octadecenoyl-2-(11Z)-octadecenoyl-sn-glycero-3-phosphate + CoA. The enzyme catalyses (9Z)-hexadecenoyl-CoA + 1-(9Z-octadecenoyl)-sn-glycero-3-phosphate = 1-(9Z-octadecenoyl)-2-(9Z-hexadecenoyl)-sn-glycero-3-phosphate + CoA. The protein operates within phospholipid metabolism; CDP-diacylglycerol biosynthesis; CDP-diacylglycerol from sn-glycerol 3-phosphate: step 2/3. Converts 1-acyl-sn-glycerol-3-phosphate (lysophosphatidic acid or LPA) into 1,2-diacyl-sn-glycerol-3-phosphate (phosphatidic acid or PA) by incorporating an acyl moiety at the sn-2 position of the glycerol backbone. The chain is 1-acyl-sn-glycerol-3-phosphate acyltransferase alpha (AGPAT1) from Bos taurus (Bovine).